The primary structure comprises 143 residues: Nucleoside diphosphate kinase (143 aa).

ATP is bound by residues K11, F59, R87, T93, R104, and N114. H117 functions as the Pros-phosphohistidine intermediate in the catalytic mechanism.

This sequence belongs to the NDK family. In terms of assembly, homotetramer. Mg(2+) is required as a cofactor.

It is found in the cytoplasm. The enzyme catalyses a 2'-deoxyribonucleoside 5'-diphosphate + ATP = a 2'-deoxyribonucleoside 5'-triphosphate + ADP. It catalyses the reaction a ribonucleoside 5'-diphosphate + ATP = a ribonucleoside 5'-triphosphate + ADP. Functionally, major role in the synthesis of nucleoside triphosphates other than ATP. The ATP gamma phosphate is transferred to the NDP beta phosphate via a ping-pong mechanism, using a phosphorylated active-site intermediate. This is Nucleoside diphosphate kinase from Citrobacter koseri (strain ATCC BAA-895 / CDC 4225-83 / SGSC4696).